The sequence spans 342 residues: P2Y purinoceptor 12 (342 aa).

Topologically, residues 1 to 27 (MQAIDNLTSAPGNTSLCTRDYKITQVL) are extracellular. Asn-6 and Asn-13 each carry an N-linked (GlcNAc...) asparagine glycan. 2 disulfide bridges follow: Cys-17-Cys-270 and Cys-97-Cys-175. The chain crosses the membrane as a helical span at residues 28 to 50 (FPLLYTVLFFVGLITNSLAMRIF). Topologically, residues 51-61 (FQIRSKSNFII) are cytoplasmic. Phosphoserine is present on residues Ser-55 and Ser-57. The chain crosses the membrane as a helical span at residues 62 to 82 (FLKNTVISDLLMILTFPFKIL). Residues 83–97 (SDAKLGAGPLRTFVC) are Extracellular-facing. Arg-93, Cys-97, and Tyr-105 together coordinate ADP. A helical membrane pass occupies residues 98-118 (QVTSVIFYFTMYISISFLGLI). Residues 119–142 (TIDRYQKTTRPFKTSNPKNLLGAK) lie on the Cytoplasmic side of the membrane. The chain crosses the membrane as a helical span at residues 143-162 (ILSVLIWAFMFLLSLPNMIL). ADP is bound by residues 156-159 (SLPN), 175-179 (CSFLK), His-187, and Asn-191. At 163–185 (TNRRPRDKNVKKCSFLKSEFGLV) the chain is on the extracellular side. The helical transmembrane segment at 186-207 (WHEIVNYICQVIFWINFLIVIV) threads the bilayer. At 208–233 (CYTLITKELYRSYVRTRGVGKVPRKK) the chain is on the cytoplasmic side. A helical transmembrane segment spans residues 234-259 (VNVKVFIIIAVFFICFVPFHFARIPY). ADP is bound by residues 256-259 (RIPY), Gln-263, and Lys-280. Residues 260-278 (TLSQTRDVFDCAAENTLFY) lie on the Extracellular side of the membrane. A helical transmembrane segment spans residues 279–298 (VKESTLWLTSLNACLDPFIY). Residues 299–342 (FFLCKSFRNSLISMLKCPNSATSQSQDNRKKEQDGGDPNEETPM) lie on the Cytoplasmic side of the membrane. Positions 317–342 (NSATSQSQDNRKKEQDGGDPNEETPM) are disordered. A compositionally biased stretch (acidic residues) spans 333 to 342 (GGDPNEETPM).

It belongs to the G-protein coupled receptor 1 family.

It is found in the cell membrane. Its function is as follows. Receptor for ADP and ATP coupled to G-proteins that inhibit the adenylyl cyclase second messenger system. Required for normal platelet aggregation and blood coagulation. The polypeptide is P2Y purinoceptor 12 (P2RY12) (Macaca fascicularis (Crab-eating macaque)).